The chain runs to 420 residues: E3 ubiquitin protein ligase DRIP2 (420 aa).

The RING-type zinc finger occupies 20-61 (CPLCDKLLRDATTISECLHTFCRKCIYEKITEDEIESCPVCD). Polar residues predominate over residues 113–123 (ISSLVVSTPRV). Disordered stretches follow at residues 113–201 (ISSL…KDVD) and 226–289 (DPKS…TFGD). Basic and acidic residues predominate over residues 154-165 (KKEEEFGDDHVE). 2 stretches are compositionally biased toward polar residues: residues 166-194 (SASSPETLKKFTQNKRQSSYANPNQSLSN) and 232-242 (GNASHNDVQGS). Basic residues predominate over residues 244-253 (TKTKDHKRKC). A compositionally biased stretch (polar residues) spans 260–273 (SNNGDPTTSETATL). Residues 274-284 (KRTRRTRRKRS) are compositionally biased toward basic residues.

In terms of assembly, interacts with DREB2A. Auto-ubiquitinated. Expressed in roots, leaves and flowers.

The enzyme catalyses S-ubiquitinyl-[E2 ubiquitin-conjugating enzyme]-L-cysteine + [acceptor protein]-L-lysine = [E2 ubiquitin-conjugating enzyme]-L-cysteine + N(6)-ubiquitinyl-[acceptor protein]-L-lysine.. Its pathway is protein modification; protein ubiquitination. E3 ubiquitin-protein ligase that acts as a negative regulator of the response to water stress. Mediates ubiquitination and subsequent proteasomal degradation of the drought-induced transcriptional activator DREB2A. Functionally redundant with DRIP1. The sequence is that of E3 ubiquitin protein ligase DRIP2 (DRIP2) from Arabidopsis thaliana (Mouse-ear cress).